Reading from the N-terminus, the 247-residue chain is Myelin-oligodendrocyte glycoprotein (247 aa).

An N-terminal signal peptide occupies residues 1–29 (MASLSRPSLPSCLCSFLLLLLLQVSSSYA). Residues 30–154 (GQFRVIGPRH…EDPFYWVSPG (125 aa)) lie on the Extracellular side of the membrane. The Ig-like V-type domain maps to 32–145 (FRVIGPRHPI…EEAAMELKVE (114 aa)). A disulfide bridge links Cys-53 with Cys-127. N-linked (GlcNAc...) asparagine glycosylation is present at Asn-60. The chain crosses the membrane as a helical span at residues 155–175 (VLVLLAVLPVLLLQITVGLIF). Over 176 to 210 (LCLQYRLRGKLRAEIENLHRTFDPHFLRVPCWKIT) the chain is Cytoplasmic. A helical membrane pass occupies residues 211 to 231 (LFVIVPVLGPLVALIICYNWL). At 232 to 247 (HRRLAGQFLEELRNPF) the chain is on the extracellular side.

This sequence belongs to the immunoglobulin superfamily. BTN/MOG family. Homodimer. May form heterodimers between the different isoforms. As to quaternary structure, (Microbial infection) Interacts with rubella virus E2 glycoprotein. In terms of tissue distribution, found exclusively in the CNS, where it is localized on the surface of myelin and oligodendrocyte cytoplasmic membranes.

It is found in the cell membrane. Its function is as follows. Mediates homophilic cell-cell adhesion. Minor component of the myelin sheath. May be involved in completion and/or maintenance of the myelin sheath and in cell-cell communication. In terms of biological role, (Microbial infection) Acts as a receptor for rubella virus. This is Myelin-oligodendrocyte glycoprotein (MOG) from Homo sapiens (Human).